We begin with the raw amino-acid sequence, 746 residues long: Chitin biosynthesis protein CHS6 (746 aa).

The segment at 1–25 is disordered; that stretch reads MNLFWPSETKKQNEIPGGDYTPGNS. The interval 734–746 is CHS5-binding; the sequence is LAWIADLDHTVQP.

The protein belongs to the CHAPS family. Component of the CHS5/6 complex composed of the 4 CHAPS proteins BCH1, BCH2, BUD7, and CHS6 as well as at least CHS5 and GTP-bound ARF1. The complex interacts with the cargo protein CHS3.

The protein resides in the golgi apparatus. The protein localises to the trans-Golgi network membrane. Functionally, member of the CHS5-ARF1P-binding proteins (CHAPS) which mediates export of specific cargo proteins, including chitin synthase CHS3. This is Chitin biosynthesis protein CHS6 (CHS6) from Saccharomyces cerevisiae (strain ATCC 204508 / S288c) (Baker's yeast).